A 185-amino-acid chain; its full sequence is Elongation factor P (185 aa).

This sequence belongs to the elongation factor P family.

The protein resides in the cytoplasm. It functions in the pathway protein biosynthesis; polypeptide chain elongation. Its function is as follows. Involved in peptide bond synthesis. Stimulates efficient translation and peptide-bond synthesis on native or reconstituted 70S ribosomes in vitro. Probably functions indirectly by altering the affinity of the ribosome for aminoacyl-tRNA, thus increasing their reactivity as acceptors for peptidyl transferase. The chain is Elongation factor P from Halalkalibacterium halodurans (strain ATCC BAA-125 / DSM 18197 / FERM 7344 / JCM 9153 / C-125) (Bacillus halodurans).